Reading from the N-terminus, the 432-residue chain is Selenocysteine lyase (432 aa).

At methionine 1 the chain carries N-acetylmethionine. The interval 1-20 is disordered; sequence MDVARNGARGSVESPPNRKV. A Phosphoserine modification is found at serine 117. Position 247 is an N6-(pyridoxal phosphate)lysine (lysine 247). Cysteine 375 serves as the catalytic S-selanylcysteine intermediate.

Belongs to the class-V pyridoxal-phosphate-dependent aminotransferase family. In terms of assembly, homodimer. Pyridoxal 5'-phosphate serves as cofactor.

The protein resides in the cytoplasm. Its subcellular location is the cytosol. The catalysed reaction is L-selenocysteine + AH2 = hydrogenselenide + L-alanine + A + H(+). Functionally, catalyzes the decomposition of L-selenocysteine to L-alanine and elemental selenium. In Rattus norvegicus (Rat), this protein is Selenocysteine lyase (Scly).